A 361-amino-acid chain; its full sequence is Spermidine/putrescine import ATP-binding protein PotA (361 aa).

An ABC transporter domain is found at 4–234; the sequence is LELRDVTRRF…PANRFIADFI (231 aa). 36–43 serves as a coordination point for ATP; sequence GPSGCGKT.

It belongs to the ABC transporter superfamily. Spermidine/putrescine importer (TC 3.A.1.11.1) family. In terms of assembly, the complex is composed of two ATP-binding proteins (PotA), two transmembrane proteins (PotB and PotC) and a solute-binding protein (PotD).

The protein resides in the cell inner membrane. The catalysed reaction is ATP + H2O + polyamine-[polyamine-binding protein]Side 1 = ADP + phosphate + polyamineSide 2 + [polyamine-binding protein]Side 1.. Functionally, part of the ABC transporter complex PotABCD involved in spermidine/putrescine import. Responsible for energy coupling to the transport system. This is Spermidine/putrescine import ATP-binding protein PotA from Nitrosomonas europaea (strain ATCC 19718 / CIP 103999 / KCTC 2705 / NBRC 14298).